The primary structure comprises 2731 residues: Putative mediator of RNA polymerase II transcription subunit 12 (2731 aa).

Coiled-coil stretches lie at residues 5-37 (QQIL…QQQQ), 75-108 (HIQQ…QQVH), 141-189 (QQIH…QQQQ), and 275-304 (IQQL…QQQQ). Disordered stretches follow at residues 29–57 (QQQM…HMIH) and 101–145 (QQQQ…QIHQ). Low complexity predominate over residues 310–320 (QPQQQQQQQQP). Disordered stretches follow at residues 310–376 (QPQQ…DDKS), 432–451 (TQKS…RPVP), 685–708 (LGHG…QQPQ), and 1251–1341 (RNNN…QQKS). Residues 327 to 337 (QNPSYHSQSQI) show a composition bias toward polar residues. Residues 347–361 (KKYEIQKPADKKELG) are compositionally biased toward basic and acidic residues. Residues 688 to 701 (GHGHGHGHHSHSHS) show a composition bias toward basic residues. Over residues 1251–1268 (RNNNNNNKNKNNNKQSNN) the composition is skewed to low complexity. 2 stretches are compositionally biased toward acidic residues: residues 1275 to 1298 (NGEE…DNDE) and 1305 to 1326 (NDNE…DDQM). Coiled-coil stretches lie at residues 1316–1344 (EDED…SNEN) and 1375–1433 (KLKK…DEEL). Disordered regions lie at residues 1778–1825 (HDDN…NNNG), 1892–1958 (TQSS…NNTT), 2212–2258 (SSSS…NNVK), 2307–2351 (TSSV…QQQQ), 2472–2532 (EIEK…KPQT), and 2705–2731 (HQQI…NNYK). Composition is skewed to low complexity over residues 1783–1824 (ENNN…NNNN), 1892–1909 (TQSS…QSPT), 1916–1958 (NSTN…NNTT), 2212–2250 (SSSS…QQQQ), 2307–2322 (TSSV…STTS), 2337–2351 (QQQT…QQQQ), 2472–2501 (EIEK…HQQL), 2508–2532 (LQQQ…KPQT), and 2705–2720 (HQQI…HQQQ). A coiled-coil region spans residues 2239–2270 (TNQQQQQQQQQQADQKNNVKKKLHELYQKIKS). A coiled-coil region spans residues 2336-2363 (LQQQTSQQQQQQQQQQQQQSQQHQQQQQ). The stretch at 2523 to 2662 (QQLQQQKPQT…QQQQQQLQQL (140 aa)) forms a coiled coil. A compositionally biased stretch (polar residues) spans 2721 to 2731 (KCSTTKYNNYK).

It belongs to the Mediator complex subunit 12 family. In terms of assembly, component of the Mediator complex.

Its subcellular location is the nucleus. Component of the Mediator complex, a coactivator involved in the regulated transcription of nearly all RNA polymerase II-dependent genes. Mediator functions as a bridge to convey information from gene-specific regulatory proteins to the basal RNA polymerase II transcription machinery. Mediator is recruited to promoters by direct interactions with regulatory proteins and serves as a scaffold for the assembly of a functional preinitiation complex with RNA polymerase II and the general transcription factors. In Dictyostelium discoideum (Social amoeba), this protein is Putative mediator of RNA polymerase II transcription subunit 12 (med12).